A 737-amino-acid polypeptide reads, in one-letter code: Catalase-peroxidase (737 aa).

The tryptophyl-tyrosyl-methioninium (Trp-Tyr) (with M-251) cross-link spans 102-225; the sequence is WHSAGTYRTG…LGAVQMGLIY (124 aa). His103 acts as the Proton acceptor in catalysis. A cross-link (tryptophyl-tyrosyl-methioninium (Tyr-Met) (with W-102)) is located at residues 225–251; that stretch reads YVNPEGPNGKPDPLAAAHDIRETFARM. Position 266 (His266) interacts with heme b.

This sequence belongs to the peroxidase family. Peroxidase/catalase subfamily. In terms of assembly, homodimer or homotetramer. It depends on heme b as a cofactor. Formation of the three residue Trp-Tyr-Met cross-link is important for the catalase, but not the peroxidase activity of the enzyme.

It catalyses the reaction H2O2 + AH2 = A + 2 H2O. It carries out the reaction 2 H2O2 = O2 + 2 H2O. Functionally, bifunctional enzyme with both catalase and broad-spectrum peroxidase activity. The sequence is that of Catalase-peroxidase from Caulobacter sp. (strain K31).